The primary structure comprises 267 residues: RWD domain-containing protein 3 (267 aa).

In terms of domain architecture, RWD spans 7–114 (QELSALAAIF…LWTQQNLRHI (108 aa)). 2 interaction with UBE2I/UBC9 regions span residues 13–15 (AAI) and 100–102 (VHE).

Interacts with UBE2I/UBC9, NFKBIA, HIF1A and NCOA2.

Its subcellular location is the nucleus. It localises to the cytoplasm. Enhancer of SUMO conjugation. Via its interaction with UBE2I/UBC9, increases SUMO conjugation to proteins by promoting the binding of E1 and E2 enzymes, thioester linkage between SUMO and UBE2I/UBC9 and transfer of SUMO to specific target proteins which include HIF1A, PIAS, NFKBIA, NR3C1 and TOP1. Positively regulates the NF-kappa-B signaling pathway by enhancing the sumoylation of NF-kappa-B inhibitor alpha (NFKBIA), promoting its stabilization which consequently leads to an increased inhibition of NF-kappa-B transcriptional activity. Negatively regulates the hypoxia-inducible factor-1 alpha (HIF1A) signaling pathway by increasing the sumoylation of HIF1A, promoting its stabilization, transcriptional activity and the expression of its target gene VEGFA during hypoxia. Has no effect on ubiquitination. In Rattus norvegicus (Rat), this protein is RWD domain-containing protein 3 (Rwdd3).